The following is a 204-amino-acid chain: Holliday junction branch migration complex subunit RuvA (204 aa).

The interval Met1 to Ala64 is domain I. Residues Thr65 to Ser143 are domain II. The interval Val144–Ala154 is flexible linker. Residues Ala154 to Thr204 form a domain III region.

Belongs to the RuvA family. As to quaternary structure, homotetramer. Forms an RuvA(8)-RuvB(12)-Holliday junction (HJ) complex. HJ DNA is sandwiched between 2 RuvA tetramers; dsDNA enters through RuvA and exits via RuvB. An RuvB hexamer assembles on each DNA strand where it exits the tetramer. Each RuvB hexamer is contacted by two RuvA subunits (via domain III) on 2 adjacent RuvB subunits; this complex drives branch migration. In the full resolvosome a probable DNA-RuvA(4)-RuvB(12)-RuvC(2) complex forms which resolves the HJ.

The protein resides in the cytoplasm. Functionally, the RuvA-RuvB-RuvC complex processes Holliday junction (HJ) DNA during genetic recombination and DNA repair, while the RuvA-RuvB complex plays an important role in the rescue of blocked DNA replication forks via replication fork reversal (RFR). RuvA specifically binds to HJ cruciform DNA, conferring on it an open structure. The RuvB hexamer acts as an ATP-dependent pump, pulling dsDNA into and through the RuvAB complex. HJ branch migration allows RuvC to scan DNA until it finds its consensus sequence, where it cleaves and resolves the cruciform DNA. This chain is Holliday junction branch migration complex subunit RuvA, found in Bartonella tribocorum (strain CIP 105476 / IBS 506).